The primary structure comprises 114 residues: Iron-sulfur cluster insertion protein ErpA (114 aa).

The iron-sulfur cluster site is built by cysteine 42, cysteine 106, and cysteine 108.

This sequence belongs to the HesB/IscA family. Homodimer. Iron-sulfur cluster is required as a cofactor.

Required for insertion of 4Fe-4S clusters for at least IspG. This chain is Iron-sulfur cluster insertion protein ErpA, found in Haemophilus influenzae (strain PittEE).